A 27-amino-acid polypeptide reads, in one-letter code: Secretin (27 aa).

A Leucine amide modification is found at leucine 27.

It belongs to the glucagon family.

The protein localises to the secreted. Functionally, hormone involved in different processes, such as regulation of the pH of the duodenal content, food intake and water homeostasis. Exerts its biological effects by binding to secretin receptor (SCTR), a G-protein coupled receptor expressed in the basolateral domain of several cells. Acts as a key gastrointestinal hormone by regulating the pH of the duodenal content. Secreted by S cells of the duodenum in the crypts of Lieberkuehn and regulates the pH of the duodenum by (1) inhibiting the secretion of gastric acid from the parietal cells of the stomach and (2) stimulating the production of bicarbonate (NaHCO(3)) from the ductal cells of the pancreas. Production of bicarbonate is essential to neutralize the pH and ensure no damage is done to the small intestine by the gastric acid. In addition to regulating the pH of the duodenal content, plays a central role in diet induced thermogenesis: acts as a non-sympathetic brown fat (BAT) activator mediating prandial thermogenesis, which consequentially induces satiation. Mechanistically, secretin released by the gut after a meal binds to secretin receptor (SCTR) in brown adipocytes, activating brown fat thermogenesis by stimulating lipolysis, which is sensed in the brain and promotes satiation. Also able to stimulate lipolysis in white adipocytes. Also plays an important role in cellular osmoregulation: released into the systemic circulation in response to hyperosmolality and acts at different levels in the hypothalamus, pituitary and kidney to regulate water homeostasis. Also plays a role in the central nervous system, possibly by acting as a neuropeptide hormone: required for hippocampal synaptic function and neural progenitor cells maintenance. This Oryctolagus cuniculus (Rabbit) protein is Secretin.